The primary structure comprises 164 residues: ATP synthase subunit b 1 (164 aa).

Residues 8–28 (AETWVAVGFAILMVVFVYFGV) traverse the membrane as a helical segment.

This sequence belongs to the ATPase B chain family. As to quaternary structure, F-type ATPases have 2 components, F(1) - the catalytic core - and F(0) - the membrane proton channel. F(1) has five subunits: alpha(3), beta(3), gamma(1), delta(1), epsilon(1). F(0) has three main subunits: a(1), b(2) and c(10-14). The alpha and beta chains form an alternating ring which encloses part of the gamma chain. F(1) is attached to F(0) by a central stalk formed by the gamma and epsilon chains, while a peripheral stalk is formed by the delta and b chains.

Its subcellular location is the cell inner membrane. Its function is as follows. F(1)F(0) ATP synthase produces ATP from ADP in the presence of a proton or sodium gradient. F-type ATPases consist of two structural domains, F(1) containing the extramembraneous catalytic core and F(0) containing the membrane proton channel, linked together by a central stalk and a peripheral stalk. During catalysis, ATP synthesis in the catalytic domain of F(1) is coupled via a rotary mechanism of the central stalk subunits to proton translocation. Functionally, component of the F(0) channel, it forms part of the peripheral stalk, linking F(1) to F(0). The protein is ATP synthase subunit b 1 of Rhodopseudomonas palustris (strain BisA53).